The primary structure comprises 246 residues: Probable transcriptional regulatory protein CA_C2295 (246 aa).

This sequence belongs to the TACO1 family.

The protein localises to the cytoplasm. The protein is Probable transcriptional regulatory protein CA_C2295 of Clostridium acetobutylicum (strain ATCC 824 / DSM 792 / JCM 1419 / IAM 19013 / LMG 5710 / NBRC 13948 / NRRL B-527 / VKM B-1787 / 2291 / W).